Here is a 1435-residue protein sequence, read N- to C-terminus: Gag-Pol polyprotein (1435 aa).

Gly2 carries the N-myristoyl glycine; by host lipid modification. The interaction with Gp41 stretch occupies residues 7-31 (VLSGGELDRWEKIRLRPGGKKKYKL). Residues 8–43 (LSGGELDRWEKIRLRPGGKKKYKLKHIVWASRELER) are interaction with host CALM1. The interaction with host AP3D1 stretch occupies residues 12–19 (ELDRWEKI). The segment at 14 to 33 (DRWEKIRLRPGGKKKYKLKH) is interaction with membrane phosphatidylinositol 4,5-bisphosphate and RNA. The Nuclear export signal motif lies at 16 to 22 (WEKIRLR). The short motif at 26 to 32 (KKKYKLK) is the Nuclear localization signal element. The tract at residues 73–77 (EELKS) is interaction with membrane phosphatidylinositol 4,5-bisphosphate. A disordered region spans residues 106 to 127 (EEQNKSKKKAQQAAADTGNSSQ). Tyr132 is subject to Phosphotyrosine; by host. Positions 189-227 (NTVGGHQAAMQMLKETINEEAAEWDRLHPVQAGPVAPGQ) are interaction with human PPIA/CYPA and NUP153. A dimerization/Multimerization of capsid protein p24 region spans residues 277–363 (YSPSSILDIK…GGPGHKARVL (87 aa)). CCHC-type zinc fingers lie at residues 390-407 (VKCF…NCRA) and 411-428 (KGCW…DCTE). Residues 489-493 (PQITL) are dimerization of protease. In terms of domain architecture, Peptidase A2 spans 508–577 (KEALLDTGAD…TPVNIIGRNL (70 aa)). Catalysis depends on Asp513, which acts as the For protease activity; shared with dimeric partner. 2 dimerization of protease regions span residues 537 to 543 (GIGGFIK) and 576 to 588 (NLLT…LNFP). A Reverse transcriptase domain is found at 631-821 (EGKISKIGPE…PPFLWMGYEL (191 aa)). Mg(2+) is bound by residues Asp697, Asp772, and Asp773. An RT 'primer grip' region spans residues 814 to 822 (FLWMGYELH). The Tryptophan repeat motif motif lies at 985-1001 (WEAWWTDYWQATWIPEW). Positions 1021–1144 (IVGAETFYVD…VDKLVSAGIR (124 aa)) constitute an RNase H type-1 domain. Residues Asp1030, Glu1065, Asp1085, and Asp1136 each contribute to the Mg(2+) site. Residues 1150–1191 (DGIDKAQEEHEKYHTNWRAMASDFNLPPVVAKEIVASCNKCQ) form an Integrase-type zinc finger. Zn(2+) contacts are provided by His1159, His1163, Cys1187, and Cys1190. The 151-residue stretch at 1201–1351 (VDCSPGIWQL…SAGERIVDII (151 aa)) folds into the Integrase catalytic domain. Mg(2+)-binding residues include Asp1211, Asp1263, and Glu1299. Residues 1370–1417 (FRVYYRDSRDPLWKGPAKLLWKGEGAVVIQDNSDIKVVPRRKAKIIRD) constitute a DNA-binding region (integrase-type).

Homotrimer; further assembles as hexamers of trimers. Interacts with gp41 (via C-terminus). Interacts with host CALM1; this interaction induces a conformational change in the Matrix protein, triggering exposure of the myristate group. Interacts with host AP3D1; this interaction allows the polyprotein trafficking to multivesicular bodies during virus assembly. Part of the pre-integration complex (PIC) which is composed of viral genome, matrix protein, Vpr and integrase. In terms of assembly, homodimer; the homodimer further multimerizes as homohexamers or homopentamers. Interacts with human PPIA/CYPA; This interaction stabilizes the capsid. Interacts with human NUP153. Interacts with host PDZD8; this interaction stabilizes the capsid. Interacts with monkey TRIM5; this interaction destabilizes the capsid. As to quaternary structure, homodimer, whose active site consists of two apposed aspartic acid residues. Heterodimer of p66 RT and p51 RT (RT p66/p51). Heterodimerization of RT is essential for DNA polymerase activity. The overall folding of the subdomains is similar in p66 RT and p51 RT but the spatial arrangements of the subdomains are dramatically different. In terms of assembly, homotetramer; may further associate as a homohexadecamer. Part of the pre-integration complex (PIC) which is composed of viral genome, matrix protein, Vpr and integrase. Interacts with human SMARCB1/INI1 and human PSIP1/LEDGF isoform 1. Interacts with human KPNA3; this interaction might play a role in nuclear import of the pre-integration complex. Interacts with human NUP153; this interaction might play a role in nuclear import of the pre-integration complex. Requires Mg(2+) as cofactor. Specific enzymatic cleavages by the viral protease yield mature proteins. The protease is released by autocatalytic cleavage. The polyprotein is cleaved during and after budding, this process is termed maturation. Proteolytic cleavage of p66 RT removes the RNase H domain to yield the p51 RT subunit. Nucleocapsid protein p7 might be further cleaved after virus entry. In terms of processing, tyrosine phosphorylated presumably in the virion by a host kinase. Phosphorylation is apparently not a major regulator of membrane association. Post-translationally, phosphorylated possibly by host MAPK1; this phosphorylation is necessary for Pin1-mediated virion uncoating. Methylated by host PRMT6, impairing its function by reducing RNA annealing and the initiation of reverse transcription.

It is found in the host cell membrane. It localises to the host endosome. The protein localises to the host multivesicular body. The protein resides in the virion membrane. Its subcellular location is the host nucleus. It is found in the host cytoplasm. It localises to the virion. It carries out the reaction Specific for a P1 residue that is hydrophobic, and P1' variable, but often Pro.. It catalyses the reaction Endohydrolysis of RNA in RNA/DNA hybrids. Three different cleavage modes: 1. sequence-specific internal cleavage of RNA. Human immunodeficiency virus type 1 and Moloney murine leukemia virus enzymes prefer to cleave the RNA strand one nucleotide away from the RNA-DNA junction. 2. RNA 5'-end directed cleavage 13-19 nucleotides from the RNA end. 3. DNA 3'-end directed cleavage 15-20 nucleotides away from the primer terminus.. The enzyme catalyses 3'-end directed exonucleolytic cleavage of viral RNA-DNA hybrid.. The catalysed reaction is DNA(n) + a 2'-deoxyribonucleoside 5'-triphosphate = DNA(n+1) + diphosphate. With respect to regulation, protease: The viral protease is inhibited by many synthetic protease inhibitors (PIs), such as amprenavir, atazanavir, indinavir, loprinavir, nelfinavir, ritonavir and saquinavir. Use of protease inhibitors in tritherapy regimens permit more ambitious therapeutic strategies. Reverse transcriptase/ribonuclease H: RT can be inhibited either by nucleoside RT inhibitors (NRTIs) or by non nucleoside RT inhibitors (NNRTIs). NRTIs act as chain terminators, whereas NNRTIs inhibit DNA polymerization by binding a small hydrophobic pocket near the RT active site and inducing an allosteric change in this region. Classical NRTIs are abacavir, adefovir (PMEA), didanosine (ddI), lamivudine (3TC), stavudine (d4T), tenofovir (PMPA), zalcitabine (ddC), and zidovudine (AZT). Classical NNRTIs are atevirdine (BHAP U-87201E), delavirdine, efavirenz (DMP-266), emivirine (I-EBU), and nevirapine (BI-RG-587). The tritherapies used as a basic effective treatment of AIDS associate two NRTIs and one NNRTI. Its function is as follows. Mediates, with Gag polyprotein, the essential events in virion assembly, including binding the plasma membrane, making the protein-protein interactions necessary to create spherical particles, recruiting the viral Env proteins, and packaging the genomic RNA via direct interactions with the RNA packaging sequence (Psi). Gag-Pol polyprotein may regulate its own translation, by the binding genomic RNA in the 5'-UTR. At low concentration, the polyprotein would promote translation, whereas at high concentration, the polyprotein would encapsidate genomic RNA and then shut off translation. Targets the polyprotein to the plasma membrane via a multipartite membrane-binding signal, that includes its myristoylated N-terminus. Matrix protein is part of the pre-integration complex. Implicated in the release from host cell mediated by Vpu. Binds to RNA. Functionally, forms the conical core that encapsulates the genomic RNA-nucleocapsid complex in the virion. Most core are conical, with only 7% tubular. The core is constituted by capsid protein hexamer subunits. The core is disassembled soon after virion entry. Host restriction factors such as TRIM5-alpha or TRIMCyp bind retroviral capsids and cause premature capsid disassembly, leading to blocks in reverse transcription. Capsid restriction by TRIM5 is one of the factors which restricts HIV-1 to the human species. Host PIN1 apparently facilitates the virion uncoating. On the other hand, interactions with PDZD8 or CYPA stabilize the capsid. In terms of biological role, encapsulates and protects viral dimeric unspliced genomic RNA (gRNA). Binds these RNAs through its zinc fingers. Acts as a nucleic acid chaperone which is involved in rearangement of nucleic acid secondary structure during gRNA retrotranscription. Also facilitates template switch leading to recombination. As part of the polyprotein, participates in gRNA dimerization, packaging, tRNA incorporation and virion assembly. Its function is as follows. Aspartyl protease that mediates proteolytic cleavages of Gag and Gag-Pol polyproteins during or shortly after the release of the virion from the plasma membrane. Cleavages take place as an ordered, step-wise cascade to yield mature proteins. This process is called maturation. Displays maximal activity during the budding process just prior to particle release from the cell. Also cleaves Nef and Vif, probably concomitantly with viral structural proteins on maturation of virus particles. Hydrolyzes host EIF4GI and PABP1 in order to shut off the capped cellular mRNA translation. The resulting inhibition of cellular protein synthesis serves to ensure maximal viral gene expression and to evade host immune response. Also mediates cleavage of host YTHDF3. Mediates cleavage of host CARD8, thereby activating the CARD8 inflammasome, leading to the clearance of latent HIV-1 in patient CD4(+) T-cells after viral reactivation; in contrast, HIV-1 can evade CARD8-sensing when its protease remains inactive in infected cells prior to viral budding. Multifunctional enzyme that converts the viral RNA genome into dsDNA in the cytoplasm, shortly after virus entry into the cell. This enzyme displays a DNA polymerase activity that can copy either DNA or RNA templates, and a ribonuclease H (RNase H) activity that cleaves the RNA strand of RNA-DNA heteroduplexes in a partially processive 3' to 5' endonucleasic mode. Conversion of viral genomic RNA into dsDNA requires many steps. A tRNA(3)-Lys binds to the primer-binding site (PBS) situated at the 5'-end of the viral RNA. RT uses the 3' end of the tRNA primer to perform a short round of RNA-dependent minus-strand DNA synthesis. The reading proceeds through the U5 region and ends after the repeated (R) region which is present at both ends of viral RNA. The portion of the RNA-DNA heteroduplex is digested by the RNase H, resulting in a ssDNA product attached to the tRNA primer. This ssDNA/tRNA hybridizes with the identical R region situated at the 3' end of viral RNA. This template exchange, known as minus-strand DNA strong stop transfer, can be either intra- or intermolecular. RT uses the 3' end of this newly synthesized short ssDNA to perform the RNA-dependent minus-strand DNA synthesis of the whole template. RNase H digests the RNA template except for two polypurine tracts (PPTs) situated at the 5'-end and near the center of the genome. It is not clear if both polymerase and RNase H activities are simultaneous. RNase H probably can proceed both in a polymerase-dependent (RNA cut into small fragments by the same RT performing DNA synthesis) and a polymerase-independent mode (cleavage of remaining RNA fragments by free RTs). Secondly, RT performs DNA-directed plus-strand DNA synthesis using the PPTs that have not been removed by RNase H as primers. PPTs and tRNA primers are then removed by RNase H. The 3' and 5' ssDNA PBS regions hybridize to form a circular dsDNA intermediate. Strand displacement synthesis by RT to the PBS and PPT ends produces a blunt ended, linear dsDNA copy of the viral genome that includes long terminal repeats (LTRs) at both ends. Functionally, catalyzes viral DNA integration into the host chromosome, by performing a series of DNA cutting and joining reactions. This enzyme activity takes place after virion entry into a cell and reverse transcription of the RNA genome in dsDNA. The first step in the integration process is 3' processing. This step requires a complex comprising the viral genome, matrix protein, Vpr and integrase. This complex is called the pre-integration complex (PIC). The integrase protein removes 2 nucleotides from each 3' end of the viral DNA, leaving recessed CA OH's at the 3' ends. In the second step, the PIC enters cell nucleus. This process is mediated through integrase and Vpr proteins, and allows the virus to infect a non dividing cell. This ability to enter the nucleus is specific of lentiviruses, other retroviruses cannot and rely on cell division to access cell chromosomes. In the third step, termed strand transfer, the integrase protein joins the previously processed 3' ends to the 5' ends of strands of target cellular DNA at the site of integration. The 5'-ends are produced by integrase-catalyzed staggered cuts, 5 bp apart. A Y-shaped, gapped, recombination intermediate results, with the 5'-ends of the viral DNA strands and the 3' ends of target DNA strands remaining unjoined, flanking a gap of 5 bp. The last step is viral DNA integration into host chromosome. This involves host DNA repair synthesis in which the 5 bp gaps between the unjoined strands are filled in and then ligated. Since this process occurs at both cuts flanking the HIV genome, a 5 bp duplication of host DNA is produced at the ends of HIV-1 integration. Alternatively, Integrase may catalyze the excision of viral DNA just after strand transfer, this is termed disintegration. This is Gag-Pol polyprotein (gag-pol) from Human immunodeficiency virus type 1 group M subtype B (strain 89.6) (HIV-1).